We begin with the raw amino-acid sequence, 207 residues long: NAD(P)H dehydrogenase (quinone) (207 aa).

The 192-residue stretch at 3–194 (VQIIFYSMYG…EMAKFQGRHV (192 aa)) folds into the Flavodoxin-like domain. Residues 9 to 14 (SMYGHI) and 82 to 84 (TRF) contribute to the FMN site. NAD(+) is bound at residue Tyr11. Residue Trp102 participates in substrate binding. FMN contacts are provided by residues 117–123 (STATQHG) and His138.

Belongs to the WrbA family. FMN serves as cofactor.

The enzyme catalyses a quinone + NADH + H(+) = a quinol + NAD(+). It carries out the reaction a quinone + NADPH + H(+) = a quinol + NADP(+). This Aromatoleum aromaticum (strain DSM 19018 / LMG 30748 / EbN1) (Azoarcus sp. (strain EbN1)) protein is NAD(P)H dehydrogenase (quinone).